The primary structure comprises 133 residues: MANTDPISDMLTRIRNACEKRHQTTNIPLSRMNRSIAKVLEQEGFIDQFSEAGEGVQKHLVLSLKYSGKQKVPTIRSVQRVSKPGLRIYTNRRDLPKVLGGLGVAIISTSKGVMSDRDARKEGVGGEVLCYVY.

Belongs to the universal ribosomal protein uS8 family. In terms of assembly, part of the 30S ribosomal subunit. Contacts proteins S5 and S12.

One of the primary rRNA binding proteins, it binds directly to 16S rRNA central domain where it helps coordinate assembly of the platform of the 30S subunit. The chain is Small ribosomal subunit protein uS8 from Synechococcus sp. (strain RCC307).